The following is a 569-amino-acid chain: uncharacterized protein (569 aa).

The first 24 residues, 1–24, serve as a signal peptide directing secretion; it reads MKFQRKYWGLLSTLGVSSAVALSA. Residue Cys-25 is the site of N-palmitoyl cysteine attachment. Cys-25 carries S-diacylglycerol cysteine lipidation. Disordered stretches follow at residues 111 to 137 and 242 to 267; these read SNMK…EWEV and GKNG…KKIE. Low complexity-rich tracts occupy residues 119 to 130 and 249 to 260; these read SSSSSSTGNNGS and KKMTTDSSSTQQ.

To M.pneumoniae MPN_456 and M.genitalium MG321 N-terminal region.

The protein resides in the cell membrane. This is an uncharacterized protein from Mycoplasma pneumoniae (strain ATCC 29342 / M129 / Subtype 1) (Mycoplasmoides pneumoniae).